We begin with the raw amino-acid sequence, 182 residues long: Transmembrane and coiled-coil domain-containing protein 2 (182 aa).

Residues 51–71 form a helical membrane-spanning segment; that stretch reads VQIILRISFLILLGIGIYALW. Residues 124–151 adopt a coiled-coil conformation; that stretch reads GLQEKILKKLKTVENKMKNLEGIIVAQK.

It localises to the membrane. The protein is Transmembrane and coiled-coil domain-containing protein 2 (TMCO2) of Homo sapiens (Human).